Here is a 392-residue protein sequence, read N- to C-terminus: GDSL esterase/lipase ESM1 (392 aa).

Residues 1-28 (MADNLNLVSVLGVLLVLTIFHNPIIVYA) form the signal peptide. Ser-43 (nucleophile) is an active-site residue. Residues Asn-146, Asn-166, and Asn-290 are each glycosylated (N-linked (GlcNAc...) asparagine). Catalysis depends on residues Asp-324 and His-327.

The protein belongs to the 'GDSL' lipolytic enzyme family.

The protein localises to the secreted. Its function is as follows. Represses or inhibits nitriles production from methionine-derived and from indol-3-ylmethyl glucosinolates. Favors isothiocyanate production. The sequence is that of GDSL esterase/lipase ESM1 (ESM1) from Arabidopsis thaliana (Mouse-ear cress).